The sequence spans 190 residues: Large ribosomal subunit protein eL19 (190 aa).

Disordered stretches follow at residues threonine 56 to lysine 85 and asparagine 166 to asparagine 190. Residues alanine 72–glycine 83 show a composition bias toward basic residues. Residues asparagine 166–leucine 184 are compositionally biased toward basic and acidic residues.

It belongs to the eukaryotic ribosomal protein eL19 family. As to quaternary structure, component of the large ribosomal subunit. Mature ribosomes consist of a small (40S) and a large (60S) subunit. The 40S subunit contains about 32 different proteins and 1 molecule of RNA (18S). The 60S subunit contains 45 different proteins and 3 molecules of RNA (25S, 5.8S and 5S).

It is found in the cytoplasm. Component of the ribosome, a large ribonucleoprotein complex responsible for the synthesis of proteins in the cell. The small ribosomal subunit (SSU) binds messenger RNAs (mRNAs) and translates the encoded message by selecting cognate aminoacyl-transfer RNA (tRNA) molecules. The large subunit (LSU) contains the ribosomal catalytic site termed the peptidyl transferase center (PTC), which catalyzes the formation of peptide bonds, thereby polymerizing the amino acids delivered by tRNAs into a polypeptide chain. The nascent polypeptides leave the ribosome through a tunnel in the LSU and interact with protein factors that function in enzymatic processing, targeting, and the membrane insertion of nascent chains at the exit of the ribosomal tunnel. RPL19A may play a role in the last stages of translation initiation, in particular subunit joining and shedding/releasing factors. The sequence is that of Large ribosomal subunit protein eL19 from Candida albicans (strain SC5314 / ATCC MYA-2876) (Yeast).